Here is a 1094-residue protein sequence, read N- to C-terminus: RecBCD enzyme subunit RecB (1094 aa).

The UvrD-like helicase ATP-binding domain occupies 1 to 326 (MDRFELLGPL…YTLGVNWRSD (326 aa)). The interval 1–713 (MDRFELLGPL…LLRGRRPGQS (713 aa)) is DNA-binding and helicase activity, interacts with RecC. 21–28 (ASAGTGKT) lines the ATP pocket. The UvrD-like helicase C-terminal domain occupies 357–613 (AGHRLASAPR…QIMTVFVAKG (257 aa)). Positions 775 to 1094 (TWRRTSYSDL…DLLDRGRLQS (320 aa)) are nuclease activity, interacts with RecD and RecA. The Mg(2+) site is built by H838, D975, and D989. The For nuclease activity role is filled by D989.

Belongs to the helicase family. UvrD subfamily. Heterotrimer of RecB, RecC and RecD. All subunits contribute to DNA-binding. Interacts with RecA. The cofactor is Mg(2+).

The enzyme catalyses Exonucleolytic cleavage (in the presence of ATP) in either 5'- to 3'- or 3'- to 5'-direction to yield 5'-phosphooligonucleotides.. It carries out the reaction Couples ATP hydrolysis with the unwinding of duplex DNA by translocating in the 3'-5' direction.. It catalyses the reaction ATP + H2O = ADP + phosphate + H(+). Its function is as follows. A helicase/nuclease that prepares dsDNA breaks (DSB) for recombinational DNA repair. Binds to DSBs and unwinds DNA via a highly rapid and processive ATP-dependent bidirectional helicase activity. In the holoenzyme this subunit contributes ATPase, 3'-5' helicase, exonuclease activity and loads RecA onto ssDNA. Unlike the case in E.coli, suppresses RecA-dependent homologous recombination, is instead required for single-strand annealing pathway repair of DSB. In Mycobacterium tuberculosis (strain CDC 1551 / Oshkosh), this protein is RecBCD enzyme subunit RecB.